Here is a 465-residue protein sequence, read N- to C-terminus: Argininosuccinate lyase (465 aa).

It belongs to the lyase 1 family. Argininosuccinate lyase subfamily.

It is found in the cytoplasm. It carries out the reaction 2-(N(omega)-L-arginino)succinate = fumarate + L-arginine. The protein operates within amino-acid biosynthesis; L-arginine biosynthesis; L-arginine from L-ornithine and carbamoyl phosphate: step 3/3. This chain is Argininosuccinate lyase, found in Bradyrhizobium diazoefficiens (strain JCM 10833 / BCRC 13528 / IAM 13628 / NBRC 14792 / USDA 110).